The chain runs to 695 residues: Elongation factor G (695 aa).

The 275-residue stretch at 12–286 (DKLRNIGIMA…AVIDYLPSPL (275 aa)) folds into the tr-type G domain. Residues 21–28 (AHIDAGKT), 85–89 (DTPGH), and 139–142 (NKMD) contribute to the GTP site.

It belongs to the TRAFAC class translation factor GTPase superfamily. Classic translation factor GTPase family. EF-G/EF-2 subfamily.

The protein resides in the cytoplasm. In terms of biological role, catalyzes the GTP-dependent ribosomal translocation step during translation elongation. During this step, the ribosome changes from the pre-translocational (PRE) to the post-translocational (POST) state as the newly formed A-site-bound peptidyl-tRNA and P-site-bound deacylated tRNA move to the P and E sites, respectively. Catalyzes the coordinated movement of the two tRNA molecules, the mRNA and conformational changes in the ribosome. This chain is Elongation factor G, found in Thermotoga sp. (strain RQ2).